The primary structure comprises 200 residues: NADH-quinone oxidoreductase subunit C (200 aa).

Belongs to the complex I 30 kDa subunit family. NDH-1 is composed of 14 different subunits. Subunits NuoB, C, D, E, F, and G constitute the peripheral sector of the complex.

Its subcellular location is the cell inner membrane. It catalyses the reaction a quinone + NADH + 5 H(+)(in) = a quinol + NAD(+) + 4 H(+)(out). Functionally, NDH-1 shuttles electrons from NADH, via FMN and iron-sulfur (Fe-S) centers, to quinones in the respiratory chain. The immediate electron acceptor for the enzyme in this species is believed to be ubiquinone. Couples the redox reaction to proton translocation (for every two electrons transferred, four hydrogen ions are translocated across the cytoplasmic membrane), and thus conserves the redox energy in a proton gradient. The chain is NADH-quinone oxidoreductase subunit C from Rhizobium etli (strain ATCC 51251 / DSM 11541 / JCM 21823 / NBRC 15573 / CFN 42).